A 249-amino-acid polypeptide reads, in one-letter code: MNEKIAILSTYSFVNIEEPANLIPKLLLIAKRKYVRGTILLSKEGFNGSFSGSYENVNLVLEELIKLTVPKDVNVKINYSDLHPFQKLKVRLKKEIVAMNVDDLNVDLFKGEYIESKDWDSFITKQDVIVIDTRNDYEVEIGTFKSAINPYTKTFKQFPAWVHQNEKLLKGKKIAMFCTGGIRCEKSTSLLKSIGYDDVYHLKGGILQYLEDTQNKNNLWQGECFVFDDRRAVEDDLSPSERHTRLPST.

A Rhodanese domain is found at 124 to 218 (TKQDVIVIDT…YLEDTQNKNN (95 aa)). Cysteine 178 functions as the Cysteine persulfide intermediate in the catalytic mechanism.

The protein belongs to the TrhO family.

It catalyses the reaction uridine(34) in tRNA + AH2 + O2 = 5-hydroxyuridine(34) in tRNA + A + H2O. Its function is as follows. Catalyzes oxygen-dependent 5-hydroxyuridine (ho5U) modification at position 34 in tRNAs. This is tRNA uridine(34) hydroxylase from Rickettsia canadensis (strain McKiel).